The following is a 218-amino-acid chain: MSERVSEEPGLDKGDGAEECELDDPELKAIRMRVREMEEEAERLKGLSGQDKSIGVSPRPCMKLIHSKMTAGEYTEGPPRPLSAEEKKEIDKRSVYVGNVDYGGTAQDLEAHFSSCGSINRITILCDKFSGHPKGYAYIEFAERNSVDAAVTMDETVFRGRTIKVLPKRTNMPGISSTDRGGFRGRPRGNRGNYQRGQRPRGRPFRGCGRPGPLNHPY.

Basic and acidic residues predominate over residues 1–16; the sequence is MSERVSEEPGLDKGDG. Disordered regions lie at residues 1 to 26 and 169 to 218; these read MSERVSEEPGLDKGDGAEECELDDPE and RTNM…NHPY. The RRM domain maps to 93-170; it reads RSVYVGNVDY…RTIKVLPKRT (78 aa). A compositionally biased stretch (low complexity) spans 205 to 218; the sequence is FRGCGRPGPLNHPY.

The protein resides in the cytoplasm. Binds the poly(A) tail of mRNA. Unable to interact with the cap-binding complex and is therefore unlikely to be involved in translation initiation. The chain is Embryonic polyadenylate-binding protein 2-A (Pabpn1l-a) from Xenopus laevis (African clawed frog).